The chain runs to 123 residues: Small ribosomal subunit protein uS12c (123 aa).

Belongs to the universal ribosomal protein uS12 family. As to quaternary structure, part of the 30S ribosomal subunit.

The protein localises to the plastid. The protein resides in the chloroplast. In terms of biological role, with S4 and S5 plays an important role in translational accuracy. Located at the interface of the 30S and 50S subunits. This chain is Small ribosomal subunit protein uS12c (rps12), found in Huperzia lucidula (Shining clubmoss).